We begin with the raw amino-acid sequence, 257 residues long: UPF0246 protein PC1_3665 (257 aa).

Belongs to the UPF0246 family.

The protein is UPF0246 protein PC1_3665 of Pectobacterium carotovorum subsp. carotovorum (strain PC1).